The primary structure comprises 50 residues: MKTGFWQQVLPKRAGRRKEHPVQYMPHKKEENATGLMNPSLHTSHSAILK.

The tract at residues 1–50 (MKTGFWQQVLPKRAGRRKEHPVQYMPHKKEENATGLMNPSLHTSHSAILK) is disordered. Positions 35–50 (GLMNPSLHTSHSAILK) are enriched in polar residues.

This is an uncharacterized protein from Treponema pallidum (strain Nichols).